We begin with the raw amino-acid sequence, 325 residues long: Glutaminase (325 aa).

S76, N125, E169, N176, Y200, Y252, and V270 together coordinate substrate.

The protein belongs to the glutaminase family. In terms of assembly, homotetramer.

The catalysed reaction is L-glutamine + H2O = L-glutamate + NH4(+). This is Glutaminase from Clavibacter michiganensis subsp. michiganensis (strain NCPPB 382).